Consider the following 118-residue polypeptide: Small ribosomal subunit protein uS13 (118 aa).

Positions 93–118 (KKLPVRGQRTKTNARTRKGPRKLMKK) are disordered.

This sequence belongs to the universal ribosomal protein uS13 family. In terms of assembly, part of the 30S ribosomal subunit. Forms a loose heterodimer with protein S19. Forms two bridges to the 50S subunit in the 70S ribosome.

Its function is as follows. Located at the top of the head of the 30S subunit, it contacts several helices of the 16S rRNA. In the 70S ribosome it contacts the 23S rRNA (bridge B1a) and protein L5 of the 50S subunit (bridge B1b), connecting the 2 subunits; these bridges are implicated in subunit movement. Contacts the tRNAs in the A and P-sites. This Buchnera aphidicola subsp. Baizongia pistaciae (strain Bp) protein is Small ribosomal subunit protein uS13.